Here is a 317-residue protein sequence, read N- to C-terminus: MPMQEPQRRLLGPFNSTRTGAPHLELSANQTGPWCLHVSIPDGLFLSLGLVSLVENVLVVISIAKNQNLHSPMYYFICCLALSDLLVSVSIVLETTLILVLEAGALATRVTVVQQLDNVIDVLICASMVSSLCFLGAIAVDRYISIFYALRYHSIVTLPRARWAIVAIWVASISSSTLFVAYYNHTAVLLCLVTFFLATLALMVVLYVHMLARAHQHAQAIAQLHKRQHLVHQGFRLKGAATLTILLGIFFLCWGPFFLYLTLIVLCPKHPTCGCFFKNLNLFLALIIFNSIVDPLIYAFRSQELRMTLKEVLLCSW.

Topologically, residues 1–37 (MPMQEPQRRLLGPFNSTRTGAPHLELSANQTGPWCLH) are extracellular. 2 N-linked (GlcNAc...) asparagine glycosylation sites follow: Asn-15 and Asn-29. Residues 38-63 (VSIPDGLFLSLGLVSLVENVLVVISI) traverse the membrane as a helical segment. Residues 64–72 (AKNQNLHSP) lie on the Cytoplasmic side of the membrane. The helical transmembrane segment at 73 to 93 (MYYFICCLALSDLLVSVSIVL) threads the bilayer. Topologically, residues 94–118 (ETTLILVLEAGALATRVTVVQQLDN) are extracellular. Residues 119–140 (VIDVLICASMVSSLCFLGAIAV) form a helical membrane-spanning segment. At 141 to 163 (DRYISIFYALRYHSIVTLPRARW) the chain is on the cytoplasmic side. A helical membrane pass occupies residues 164-183 (AIVAIWVASISSSTLFVAYY). At 184 to 191 (NHTAVLLC) the chain is on the extracellular side. A helical transmembrane segment spans residues 192 to 211 (LVTFFLATLALMVVLYVHML). Residues 212 to 240 (ARAHQHAQAIAQLHKRQHLVHQGFRLKGA) lie on the Cytoplasmic side of the membrane. Residues 241-266 (ATLTILLGIFFLCWGPFFLYLTLIVL) traverse the membrane as a helical segment. Residues 267 to 279 (CPKHPTCGCFFKN) are Extracellular-facing. The helical transmembrane segment at 280–300 (LNLFLALIIFNSIVDPLIYAF) threads the bilayer. The Cytoplasmic portion of the chain corresponds to 301–317 (RSQELRMTLKEVLLCSW). Cys-315 is lipidated: S-palmitoyl cysteine.

This sequence belongs to the G-protein coupled receptor 1 family. In terms of assembly, interacts with MGRN1, but does not undergo MGRN1-mediated ubiquitination; this interaction competes with GNAS-binding and thus inhibits agonist-induced cAMP production. Interacts with OPN3; the interaction results in a decrease in MC1R-mediated cAMP signaling and ultimately a decrease in melanin production in melanocytes.

The protein localises to the cell membrane. Receptor for MSH (alpha, beta and gamma) and ACTH. The activity of this receptor is mediated by G proteins which activate adenylate cyclase. Mediates melanogenesis, the production of eumelanin (black/brown) and phaeomelanin (red/yellow), via regulation of cAMP signaling in melanocytes. This is Melanocyte-stimulating hormone receptor (MC1R) from Chaetodipus penicillatus (Desert pocket mouse).